The sequence spans 63 residues: Large ribosomal subunit protein bL32c (63 aa).

Residues 38 to 63 form a disordered region; it reads RSFSGVSEHPKPKGFSRQQTNNRVLG. Polar residues predominate over residues 53–63; it reads SRQQTNNRVLG.

This sequence belongs to the bacterial ribosomal protein bL32 family.

Its subcellular location is the plastid. It is found in the chloroplast. This Oryza sativa (Rice) protein is Large ribosomal subunit protein bL32c (rpl32).